Here is an 83-residue protein sequence, read N- to C-terminus: Gene 41 protein (83 aa).

The sequence is that of Gene 41 protein (41) from Mycobacterium phage L5 (Mycobacteriophage L5).